A 549-amino-acid polypeptide reads, in one-letter code: TBC1 domain family member 3G (549 aa).

The region spanning 101 to 293 is the Rab-GAP TBC domain; it reads GMPMNIRGPM…RLWDVYLVEG (193 aa). 2 S-palmitoyl cysteine lipidation sites follow: Cys-318 and Cys-325. Disordered stretches follow at residues 350 to 443 and 507 to 526; these read LTRK…QGGP and AAPSTDSDQGTPFRARDEQQ. Over residues 398-417 the composition is skewed to low complexity; sequence PRPIWSASPPRAPRSSTPCP.

In terms of processing, ubiquitinated by a CUL7-based E3 ligase, which leads to proteasomal degradation. Palmitoylation is required for membrane localization and protects TBC1D3 from ubiquitination.

It is found in the cell membrane. Functionally, acts as a GTPase activating protein for RAB5. Does not act on RAB4 or RAB11. This chain is TBC1 domain family member 3G (TBC1D3G), found in Homo sapiens (Human).